Consider the following 288-residue polypeptide: Transposase InsF for insertion sequence IS3fB (288 aa).

One can recognise an Integrase catalytic domain in the interval tyrosine 124–leucine 287.

It belongs to the transposase IS3/IS150/IS904 family.

Functionally, involved in the transposition of the insertion sequence IS3. This chain is Transposase InsF for insertion sequence IS3fB (insF7), found in Escherichia coli (strain K12).